The sequence spans 700 residues: Mitosis inducer protein blt1 (700 aa).

Composition is skewed to polar residues over residues 1–11 (MSKSAFTSKSQ) and 43–53 (PRSTALPNLSN). Disordered stretches follow at residues 1–53 (MSKS…NLSN) and 266–293 (TNNR…SKDQ). Residues 273–284 (GSDGSNSNFNGG) show a composition bias toward low complexity. The stretch at 496 to 575 (SVALDDHNRQ…LNMLQKLSMQ (80 aa)) forms a coiled coil. Disordered stretches follow at residues 634–659 (FSSF…RKPS) and 671–700 (SSGS…SSKM). At serine 636 the chain carries Phosphoserine.

In terms of assembly, interacts with cdr2, mid1 and sad1.

The protein localises to the cytoplasm. Its subcellular location is the cytoskeleton. Functionally, at the onset of mitosis, forms a medial ring structure before the arrangement of the medial actin ring. Essential for the central positioning of the division septum before the cell divides. The chain is Mitosis inducer protein blt1 (blt1) from Schizosaccharomyces pombe (strain 972 / ATCC 24843) (Fission yeast).